The following is a 276-amino-acid chain: Orotidine 5'-phosphate decarboxylase (276 aa).

Residues D40, 62-64 (KTH), 93-102 (DRKFIDIGNT), Y228, and R246 each bind substrate. The Proton donor role is filled by K95.

This sequence belongs to the OMP decarboxylase family.

The enzyme catalyses orotidine 5'-phosphate + H(+) = UMP + CO2. Its pathway is pyrimidine metabolism; UMP biosynthesis via de novo pathway; UMP from orotate: step 2/2. In Penicillium nalgiovense, this protein is Orotidine 5'-phosphate decarboxylase (pyrG).